A 402-amino-acid polypeptide reads, in one-letter code: Multidrug resistance protein MdtH (402 aa).

Residues 1 to 12 (MSRVSQARNLGK) are Cytoplasmic-facing. Residues 13 to 33 (YFLLIDNMLVVLGFFVVFPLI) traverse the membrane as a helical segment. Residues 34–98 (SIRFVDQMGW…GFATMGIAHE (65 aa)) are Periplasmic-facing. The helical transmembrane segment at 99–116 (PWLLWFSCFLSGLGGTLF) threads the bilayer. The Cytoplasmic portion of the chain corresponds to 117-138 (DPPRSALVVKLIRPEQRGRFFS). Residues 139 to 159 (LLMMQDSAGAVIGALLGSWLL) form a helical membrane-spanning segment. At 160–164 (QYDFR) the chain is on the periplasmic side. Residues 165–185 (LVCATGAILFILCALFNAWLL) traverse the membrane as a helical segment. Residues 186–213 (PAWKLSTVRTPVREGMRRVMSDKRFVTY) lie on the Cytoplasmic side of the membrane. A helical transmembrane segment spans residues 214-234 (VLTLAGYYMLAVQVMLMLPIM). Over 235 to 243 (VNDIAGSPA) the chain is Periplasmic. Residues 244-264 (AVKWMYAIEACLSLTLLYPIA) traverse the membrane as a helical segment. The Cytoplasmic segment spans residues 265–276 (RWSEKRFRLEHR). The helical transmembrane segment at 277–297 (LMAGLLVMSLSMLPIGMVGNL) threads the bilayer. The Periplasmic segment spans residues 298–299 (QQ). A helical transmembrane segment spans residues 300–320 (LFTLICAFYIGSVIAEPARET). The Cytoplasmic segment spans residues 321–339 (LSASLADARARGSYMGFSR). Residues 340–360 (LGLAIGGAIGYIGGGWLFDMG) traverse the membrane as a helical segment. The Periplasmic segment spans residues 361-367 (KALAQPE). The chain crosses the membrane as a helical span at residues 368–388 (LPWMMLGIIGFITFLALGWQF). Topologically, residues 389–402 (SHKRTPRRMLEPGA) are cytoplasmic.

It belongs to the major facilitator superfamily. DHA1 family. MdtH (TC 2.A.1.2.21) subfamily.

Its subcellular location is the cell inner membrane. This is Multidrug resistance protein MdtH from Salmonella agona (strain SL483).